Reading from the N-terminus, the 212-residue chain is 3,4-dihydroxy-2-butanone 4-phosphate synthase (212 aa).

D-ribulose 5-phosphate-binding positions include 37–38 (RE), aspartate 42, 150–154 (RRGHT), and glutamate 174. Glutamate 38 is a binding site for Mg(2+). Histidine 153 is a Mg(2+) binding site.

The protein belongs to the DHBP synthase family. Homodimer. The cofactor is Mg(2+). Mn(2+) serves as cofactor.

It carries out the reaction D-ribulose 5-phosphate = (2S)-2-hydroxy-3-oxobutyl phosphate + formate + H(+). It participates in cofactor biosynthesis; riboflavin biosynthesis; 2-hydroxy-3-oxobutyl phosphate from D-ribulose 5-phosphate: step 1/1. Its function is as follows. Catalyzes the conversion of D-ribulose 5-phosphate to formate and 3,4-dihydroxy-2-butanone 4-phosphate. The sequence is that of 3,4-dihydroxy-2-butanone 4-phosphate synthase from Shewanella halifaxensis (strain HAW-EB4).